The sequence spans 504 residues: UDP-glycosyltransferase UGT4 (504 aa).

Positions 1 to 23 (MTLLRDLLLLYINSLLFINPSIG) are cleaved as a signal peptide. Over 24 to 474 (ENILVFLPTK…SAVIDLYWFQ (451 aa)) the chain is Lumenal. Asn-54, Asn-66, Asn-69, and Asn-422 each carry an N-linked (GlcNAc...) asparagine glycan. Residues 475–495 (YILLDIILFYSLIVLILLCIL) form a helical membrane-spanning segment. Topologically, residues 496–504 (RIFFRMLTK) are cytoplasmic.

Belongs to the UDP-glycosyltransferase family.

Its subcellular location is the microsome membrane. Catalyzes the transfer of a glycosyl group from a UDP-sugar to an acceptor molecule. This chain is UDP-glycosyltransferase UGT4, found in Dactylopius coccus (Cochineal).